Consider the following 507-residue polypeptide: Histidine ammonia-lyase (507 aa).

A cross-link (5-imidazolinone (Ala-Gly)) is located at residues 141-143 (ASG). The residue at position 142 (Ser142) is a 2,3-didehydroalanine (Ser).

This sequence belongs to the PAL/histidase family. Post-translationally, contains an active site 4-methylidene-imidazol-5-one (MIO), which is formed autocatalytically by cyclization and dehydration of residues Ala-Ser-Gly.

Its subcellular location is the cytoplasm. The enzyme catalyses L-histidine = trans-urocanate + NH4(+). It participates in amino-acid degradation; L-histidine degradation into L-glutamate; N-formimidoyl-L-glutamate from L-histidine: step 1/3. This chain is Histidine ammonia-lyase, found in Cereibacter sphaeroides (strain ATCC 17029 / ATH 2.4.9) (Rhodobacter sphaeroides).